Consider the following 490-residue polypeptide: JNK-interacting protein 1 (490 aa).

Disordered regions lie at residues 1–71 (MADS…DHEP) and 213–254 (EDSS…PVSQ). A compositionally biased stretch (polar residues) spans 231 to 249 (GHSTAHSPNDFKSMSPQIT). The SH3 domain occupies 271–332 (MLEATHRGLH…PSAYAVDLDY (62 aa)). The PID domain occupies 344-479 (KERYLLGYLG…FQRFYQKFIE (136 aa)).

This sequence belongs to the JIP scaffold family. As to quaternary structure, forms homo- and heterooligomeric complexes. Binds Hep, a dual specificity protein kinase in the JNK pathway, but not its downstream target bsk. The C-terminal region interacts with the kinesin light chain protein, Klc, and the C-terminal PTY motif of amyloid-beta protein precursor-like protein, Appl. As to expression, expressed in the brain, CNS, PNS and cells posterior to the morphogenetic furrow in the eye imaginal disk of late embryos.

It is found in the cytoplasm. Its function is as follows. The JNK-interacting protein (JIP) group of scaffold proteins selectively mediates JNK signaling by aggregating specific components of the MAPK cascade to form a functional JNK signaling module. May function as a regulator of vesicle transport, through interactions with the JNK-signaling components and motor proteins. This chain is JNK-interacting protein 1 (Aplip1), found in Drosophila melanogaster (Fruit fly).